Consider the following 275-residue polypeptide: Large ribosomal subunit protein uL2 (275 aa).

Residues 222–275 (GVAMNPVDHPHGGGEGRNKGRHPTSPWGQKSKGLKTRNNKRTDSMIIRRRAKKK) are disordered. Over residues 229–239 (DHPHGGGEGRN) the composition is skewed to basic and acidic residues.

Belongs to the universal ribosomal protein uL2 family. Part of the 50S ribosomal subunit. Forms a bridge to the 30S subunit in the 70S ribosome.

In terms of biological role, one of the primary rRNA binding proteins. Required for association of the 30S and 50S subunits to form the 70S ribosome, for tRNA binding and peptide bond formation. It has been suggested to have peptidyltransferase activity; this is somewhat controversial. Makes several contacts with the 16S rRNA in the 70S ribosome. The sequence is that of Large ribosomal subunit protein uL2 from Psychrobacter arcticus (strain DSM 17307 / VKM B-2377 / 273-4).